Reading from the N-terminus, the 203-residue chain is Ribosomal RNA small subunit methyltransferase G (203 aa).

Residues Gly-75, Leu-80, 126–127, and Arg-141 contribute to the S-adenosyl-L-methionine site; that span reads VE.

It belongs to the methyltransferase superfamily. RNA methyltransferase RsmG family.

The protein resides in the cytoplasm. It catalyses the reaction guanosine(527) in 16S rRNA + S-adenosyl-L-methionine = N(7)-methylguanosine(527) in 16S rRNA + S-adenosyl-L-homocysteine. Functionally, specifically methylates the N7 position of guanine in position 527 of 16S rRNA. The polypeptide is Ribosomal RNA small subunit methyltransferase G (Ruthia magnifica subsp. Calyptogena magnifica).